A 241-amino-acid chain; its full sequence is Octanoyltransferase (241 aa).

One can recognise a BPL/LPL catalytic domain in the interval 43–228 (ADTPDEIWLV…RLTANLDGSP (186 aa)). Substrate-binding positions include 83–90 (RGGQITYH), 159–161 (ALG), and 172–174 (GVS). Catalysis depends on C190, which acts as the Acyl-thioester intermediate.

It belongs to the LipB family.

Its subcellular location is the cytoplasm. It catalyses the reaction octanoyl-[ACP] + L-lysyl-[protein] = N(6)-octanoyl-L-lysyl-[protein] + holo-[ACP] + H(+). Its pathway is protein modification; protein lipoylation via endogenous pathway; protein N(6)-(lipoyl)lysine from octanoyl-[acyl-carrier-protein]: step 1/2. Functionally, catalyzes the transfer of endogenously produced octanoic acid from octanoyl-acyl-carrier-protein onto the lipoyl domains of lipoate-dependent enzymes. Lipoyl-ACP can also act as a substrate although octanoyl-ACP is likely to be the physiological substrate. The chain is Octanoyltransferase from Paraburkholderia phytofirmans (strain DSM 17436 / LMG 22146 / PsJN) (Burkholderia phytofirmans).